The chain runs to 277 residues: Carbonyl reductase [NADPH] 1 (277 aa).

Serine 2 is subject to N-acetylserine. 2 positions are modified to phosphoserine: serine 2 and serine 30. NADP(+)-binding positions include 10–34, 63–64, and asparagine 90; these read VTGANKGIGFVIVRDLCRRFSGDVV and DI. Glutathione is bound by residues 95–97 and glutamine 106; that span reads FKT. Serine 140 is a substrate binding site. 193-194 is a binding site for glutathione; the sequence is AY. The active-site Proton acceptor is tyrosine 194. NADP(+) is bound by residues 194 to 198 and 231 to 233; these read YGVTK and VRT. An N6-1-carboxyethyl lysine modification is found at lysine 239.

This sequence belongs to the short-chain dehydrogenases/reductases (SDR) family. Monomer.

Its subcellular location is the cytoplasm. The catalysed reaction is a secondary alcohol + NADP(+) = a ketone + NADPH + H(+). It carries out the reaction prostaglandin F2alpha + NADP(+) = prostaglandin E2 + NADPH + H(+). The enzyme catalyses prostaglandin E1 + NADP(+) = 15-oxoprostaglandin E1 + NADPH + H(+). It catalyses the reaction menadione + NADPH + H(+) = menadiol + NADP(+). The catalysed reaction is prostaglandin D2 + NADP(+) = 15-oxoprostaglandin D2 + NADPH + H(+). It carries out the reaction prostaglandin E2 + NADP(+) = 15-oxoprostaglandin E2 + NADPH + H(+). The enzyme catalyses prostaglandin F2alpha + NADP(+) = 15-oxoprostaglandin F2alpha + NADPH + H(+). It catalyses the reaction daunorubicin + NADPH + H(+) = 13-dihydrodaunorubicin + NADP(+). The catalysed reaction is S-nitrosoglutathione + NADPH + H(+) = S-(hydroxysulfenamide)glutathione + NADP(+). It carries out the reaction a primary alcohol + NADP(+) = an aldehyde + NADPH + H(+). The enzyme catalyses cortisol + NADPH + H(+) = 20beta-dihydrocortisol + NADP(+). It catalyses the reaction corticosterone + NADPH + H(+) = 20beta-dihydrocorticosterone + NADP(+). Functionally, NADPH-dependent reductase with broad substrate specificity. Catalyzes the reduction of a wide variety of carbonyl compounds including quinones, prostaglandins, menadione, plus various xenobiotics. Catalyzes the reduction of the antitumor anthracyclines doxorubicin and daunorubicin to the cardiotoxic compounds doxorubicinol and daunorubicinol. Can convert prostaglandin E to prostaglandin F2-alpha. Can bind glutathione, which explains its higher affinity for glutathione-conjugated substrates. Catalyzes the reduction of S-nitrosoglutathione. In addition, participates in the glucocorticoid metabolism by catalyzing the NADPH-dependent cortisol/corticosterone into 20beta-dihydrocortisol (20b-DHF) or 20beta-corticosterone (20b-DHB), which are weak agonists of NR3C1 and NR3C2 in adipose tissue. The chain is Carbonyl reductase [NADPH] 1 from Bos taurus (Bovine).